The sequence spans 296 residues: Homoserine kinase (296 aa).

84-94 serves as a coordination point for ATP; the sequence is PLARGLGSSSS.

It belongs to the GHMP kinase family. Homoserine kinase subfamily.

It localises to the cytoplasm. It catalyses the reaction L-homoserine + ATP = O-phospho-L-homoserine + ADP + H(+). It participates in amino-acid biosynthesis; L-threonine biosynthesis; L-threonine from L-aspartate: step 4/5. Catalyzes the ATP-dependent phosphorylation of L-homoserine to L-homoserine phosphate. The sequence is that of Homoserine kinase from Lactococcus lactis subsp. lactis (strain IL1403) (Streptococcus lactis).